A 240-amino-acid polypeptide reads, in one-letter code: Bactofilin BacP (240 aa).

The interval 116–240 is interacts with PadC; sequence DVEPGRLPAE…KKVVVKKKTR (125 aa). Positions 117 to 240 are disordered; the sequence is VEPGRLPAER…KKVVVKKKTR (124 aa). Positions 126-150 are enriched in low complexity; it reads RPAVVRPTAVTRPTATPARPTIPAA. The span at 151 to 173 shows a compositional bias: pro residues; it reads RPMPPPPPSRPTPPPPPARPSAP. The segment covering 229–240 has biased composition (basic residues); that stretch reads AKKKVVVKKKTR.

Belongs to the bactofilin family. As to quaternary structure, interacts with BacN and probably also BacO, the 3 proteins colocalize as an extended structure. Interacts with PadC.

The protein localises to the cytoplasm. Its subcellular location is the cytoskeleton. Its function is as follows. A non-essential component of the chromosome segregation machinery. Positions the ParA-ParB-parS chromosome segregation machinery within the cell; BacP seems to be the most important bactofilin in this process. Forms a heteropolymeric, subpolar scaffold in the cell; BacP probably forms the core, BacO contributes to position and integrity while BacN does not seem to contribute to assembly. This is Bactofilin BacP from Myxococcus xanthus (strain DK1622).